The primary structure comprises 546 residues: MAKDIEYNETARRKLLEGVNKLANAVKVTLGPKGRNVVIDKKFGAPTITKDGVTVAKEIELEDALENMGAQMVKEVSTKTNDVAGDGTTTATILAQSIINEGLKNVTAGANPMSLKRGIDKAVTAAVESIRKRAVKIENKKDIANVASISANNDDTIGNLIADAMDKVGKDGVITVEEAKSIETTLDVVEGMQFDRGYISPYMVTDAESMVATLSDPYILIYDKKISSMKDLIHILEKVAQAGKPLVIISEEVEGEALATIVVNTLRKTISCVAVKAPGFGDRRKAMLEDIAILTGGQVISEDLGMKLENTTLQMLGRANKVTVDKENTTIIEGKGQTKEIQGRIGQIKKQIEDTTSEYDKEKLQERLAKLAGGVAVIHVGAATEVEMKEKKARVEDALSATRAAVEEGIVPGGGLTLLKAQEAVAALKLEGDEATGAKIIFRSLEEPIRMITNNAGLEGSVIVEHAKTKKGNEGFNALSMVWEDLVSAGVVDPAKVVRSALQNAASIGSMILTTEVTITDKPEKDAPNPMAGMGGGGMGGMGGMM.

ATP-binding positions include 29-32, lysine 50, 86-90, glycine 414, 477-479, and aspartate 493; these read TLGP, DGTTT, and NAL. The disordered stretch occupies residues 522 to 546; it reads KPEKDAPNPMAGMGGGGMGGMGGMM. Residues 533 to 546 show a composition bias toward gly residues; that stretch reads GMGGGGMGGMGGMM.

Belongs to the chaperonin (HSP60) family. Forms a cylinder of 14 subunits composed of two heptameric rings stacked back-to-back. Interacts with the co-chaperonin GroES.

It localises to the cytoplasm. It catalyses the reaction ATP + H2O + a folded polypeptide = ADP + phosphate + an unfolded polypeptide.. In terms of biological role, together with its co-chaperonin GroES, plays an essential role in assisting protein folding. The GroEL-GroES system forms a nano-cage that allows encapsulation of the non-native substrate proteins and provides a physical environment optimized to promote and accelerate protein folding. The chain is Chaperonin GroEL from Leptospira borgpetersenii serovar Hardjo-bovis (strain JB197).